Consider the following 403-residue polypeptide: Tyrosine--tRNA ligase (403 aa).

Positions 42-51 (PTAPDLHLGH) match the 'HIGH' region motif. Residues 226–230 (KMSKS) carry the 'KMSKS' region motif. Lys-229 is a binding site for ATP. Residues 339–400 (LRLAGLLTAA…GKRNFARVSL (62 aa)) enclose the S4 RNA-binding domain.

Belongs to the class-I aminoacyl-tRNA synthetase family. TyrS type 2 subfamily. As to quaternary structure, homodimer.

The protein resides in the cytoplasm. It catalyses the reaction tRNA(Tyr) + L-tyrosine + ATP = L-tyrosyl-tRNA(Tyr) + AMP + diphosphate + H(+). Its function is as follows. Catalyzes the attachment of tyrosine to tRNA(Tyr) in a two-step reaction: tyrosine is first activated by ATP to form Tyr-AMP and then transferred to the acceptor end of tRNA(Tyr). The protein is Tyrosine--tRNA ligase of Xanthomonas axonopodis pv. citri (strain 306).